Reading from the N-terminus, the 242-residue chain is Caffeoyl-CoA O-methyltransferase 2 (242 aa).

Lys16 is a binding site for substrate. Residues Thr58, Glu80, 82–83, Ser88, Asp106, and Ala135 each bind S-adenosyl-L-methionine; that span reads GV. Asp158 provides a ligand contact to substrate. Position 158 (Asp158) interacts with a divalent metal cation. Asp160 is a binding site for S-adenosyl-L-methionine. 2 residues coordinate a divalent metal cation: Asp184 and Asn185. Position 189 (Asn189) interacts with substrate.

The protein belongs to the class I-like SAM-binding methyltransferase superfamily. Cation-dependent O-methyltransferase family. CCoAMT subfamily. It depends on a divalent metal cation as a cofactor. In terms of tissue distribution, mostly expressed in petal limbs and tubes, and, at low levels, in stems, roots and leaves.

It localises to the cytoplasm. It is found in the cytosol. The catalysed reaction is (E)-caffeoyl-CoA + S-adenosyl-L-methionine = (E)-feruloyl-CoA + S-adenosyl-L-homocysteine + H(+). It carries out the reaction (E)-5-hydroxyferuloyl-CoA + S-adenosyl-L-methionine = (E)-sinapoyl-CoA + S-adenosyl-L-homocysteine + H(+). Its pathway is aromatic compound metabolism; phenylpropanoid biosynthesis. In terms of biological role, involved in the production of floral volatile phenylpropanoids in flowers of fragrant cultivars (e.g. cv. Mitchell and cv. V26) from cinnamic acid, a common precursor with the anthocyanin biosynthesis pathway involved in flower pigmentation. Methylates caffeoyl-CoA to feruloyl-CoA, also able to methylate 5-hydroxyferuloyl-CoA. In Petunia hybrida (Petunia), this protein is Caffeoyl-CoA O-methyltransferase 2.